A 263-amino-acid chain; its full sequence is Proteasome subunit beta type-5 (263 aa).

Positions 1–59 (MALASVLERPLPVNQRGFFGLGGRADLLDLGPGSLSDGLSLAAPGWGVPEEPGIEMLHG) are cleaved as a propeptide — removed in mature form. Thr-60 serves as the catalytic Nucleophile. Ala-108 contacts bortezomib.

The protein belongs to the peptidase T1B family. In terms of assembly, the 26S proteasome consists of a 20S proteasome core and two 19S regulatory subunits. The 20S proteasome core is a barrel-shaped complex made of 28 subunits that are arranged in four stacked rings. The two outer rings are each formed by seven alpha subunits, and the two inner rings are formed by seven beta subunits. The proteolytic activity is exerted by three beta-subunits PSMB5, PSMB6 and PSMB7. Directly interacts with POMP. Interacts with ABCB1 and TAP1. As to quaternary structure, (Microbial infection) Interacts with HIV-1 TAT protein.

Its subcellular location is the cytoplasm. It is found in the nucleus. It carries out the reaction Cleavage of peptide bonds with very broad specificity.. Functionally, component of the 20S core proteasome complex involved in the proteolytic degradation of most intracellular proteins. This complex plays numerous essential roles within the cell by associating with different regulatory particles. Associated with two 19S regulatory particles, forms the 26S proteasome and thus participates in the ATP-dependent degradation of ubiquitinated proteins. The 26S proteasome plays a key role in the maintenance of protein homeostasis by removing misfolded or damaged proteins that could impair cellular functions, and by removing proteins whose functions are no longer required. Associated with the PA200 or PA28, the 20S proteasome mediates ubiquitin-independent protein degradation. This type of proteolysis is required in several pathways including spermatogenesis (20S-PA200 complex) or generation of a subset of MHC class I-presented antigenic peptides (20S-PA28 complex). Within the 20S core complex, PSMB5 displays a chymotrypsin-like activity. In Homo sapiens (Human), this protein is Proteasome subunit beta type-5.